Here is a 310-residue protein sequence, read N- to C-terminus: Ninja-family protein 3 (310 aa).

Disordered regions lie at residues 1-29, 68-140, and 156-215; these read MASR…GEPD, SLPG…DDAQ, and DQGN…EQPP. Positions 99–108 are enriched in basic and acidic residues; that stretch reads ERWRRREMQS. Polar residues-rich tracts occupy residues 156 to 166 and 176 to 193; these read DQGNASSSMPE and KSTS…QNKS.

This sequence belongs to the Ninja family.

Its subcellular location is the nucleus. The sequence is that of Ninja-family protein 3 (AFP-D1) from Triticum aestivum (Wheat).